Here is a 421-residue protein sequence, read N- to C-terminus: UDP-N-acetylglucosamine 1-carboxyvinyltransferase (421 aa).

22–23 (KN) is a binding site for phosphoenolpyruvate. Arg93 contacts UDP-N-acetyl-alpha-D-glucosamine. The Proton donor role is filled by Cys117. Cys117 carries the 2-(S-cysteinyl)pyruvic acid O-phosphothioketal modification. UDP-N-acetyl-alpha-D-glucosamine contacts are provided by residues 122-126 (RPVDQ), Asp309, and Ile331.

It belongs to the EPSP synthase family. MurA subfamily.

The protein localises to the cytoplasm. It catalyses the reaction phosphoenolpyruvate + UDP-N-acetyl-alpha-D-glucosamine = UDP-N-acetyl-3-O-(1-carboxyvinyl)-alpha-D-glucosamine + phosphate. The protein operates within cell wall biogenesis; peptidoglycan biosynthesis. Cell wall formation. Adds enolpyruvyl to UDP-N-acetylglucosamine. This Albidiferax ferrireducens (strain ATCC BAA-621 / DSM 15236 / T118) (Rhodoferax ferrireducens) protein is UDP-N-acetylglucosamine 1-carboxyvinyltransferase.